The primary structure comprises 198 residues: Outer-membrane lipoprotein carrier protein (198 aa).

An N-terminal signal peptide occupies residues 1–17 (MKKILLSLCFLSSVAFA).

The protein belongs to the LolA family. Monomer.

It localises to the periplasm. Its function is as follows. Participates in the translocation of lipoproteins from the inner membrane to the outer membrane. Only forms a complex with a lipoprotein if the residue after the N-terminal Cys is not an aspartate (The Asp acts as a targeting signal to indicate that the lipoprotein should stay in the inner membrane). This chain is Outer-membrane lipoprotein carrier protein, found in Aliivibrio salmonicida (strain LFI1238) (Vibrio salmonicida (strain LFI1238)).